The chain runs to 493 residues: MQPQRDLRGLWLLLLSLFLLLFEVARAGRPVVSCPANCLCASNILSCSKQQLPNVPQSLPGYTALLDLSHNNLSRLKAEWTPTRLTNLHSLLLSHNHLNFISSEAFVPVPNLRYLDLSSNHLHTLDEFLFSGLQALEVLLLYNNHIVVVDRNAFEDMAQLQKLYLSQNMISRFPLELIKDANRLPKLTLLDLSSNKLKKLPLTDLQKLPAWVKNGLYLHNNPLECDCKLYQLFSHWQYRQLSSVMDFQEDLYCVHSKKLHNVFSLDFFNCSEYKESAWEAHLGDTLTITCDTKQQGMTKVWVTPSNEQVLNQGANGTVTVSEDGNLHFKEVQVEDGGVYTCYAMGETFNETLSVELKVYNFTLHGHHDTLNTAYTTLVGCILSVVLVLIYLYLTPCRCWCRGVEKPSSHQGDSLSSSMLSTTPNHDPMAGGDKDDGFDRRVAFLEPAGPGQGQNGKLKPGNTLPVPEATGKGQRRMSDPESVSSVFSDTPIVV.

The N-terminal stretch at 1-27 (MQPQRDLRGLWLLLLSLFLLLFEVARA) is a signal peptide. One can recognise an LRRNT domain in the interval 28–61 (GRPVVSCPANCLCASNILSCSKQQLPNVPQSLPG). At 28-372 (GRPVVSCPAN…LHGHHDTLNT (345 aa)) the chain is on the extracellular side. 2 disulfides stabilise this stretch: C34-C40 and C38-C47. 6 LRR repeats span residues 62–83 (YTALLDLSHNNLSRLKAEWTPT), 87–108 (NLHSLLLSHNHLNFISSEAFVP), 111–132 (NLRYLDLSSNHLHTLDEFLFSG), 135–156 (ALEVLLLYNNHIVVVDRNAFED), 159–179 (QLQKLYLSQNMISRFPLELIK), and 186–206 (KLTLLDLSSNKLKKLPLTDLQ). N72 carries an N-linked (GlcNAc...) asparagine glycan. One can recognise an LRRCT domain in the interval 221-272 (NPLECDCKLYQLFSHWQYRQLSSVMDFQEDLYCVHSKKLHNVFSLDFFNCSE). Intrachain disulfides connect C225–C253, C227–C270, and C290–C341. N-linked (GlcNAc...) asparagine glycans are attached at residues N269, N315, N349, and N360. An Ig-like C2-type domain is found at 269 to 353 (NCSEYKESAW…MGETFNETLS (85 aa)). Residues 373–393 (AYTTLVGCILSVVLVLIYLYL) traverse the membrane as a helical segment. Residues 394–493 (TPCRCWCRGV…SVFSDTPIVV (100 aa)) lie on the Cytoplasmic side of the membrane. Residues 405-493 (KPSSHQGDSL…SVFSDTPIVV (89 aa)) are disordered. Residues 408-424 (SHQGDSLSSSMLSTTPN) show a composition bias toward polar residues. Residues 431–442 (GDKDDGFDRRVA) show a composition bias toward basic and acidic residues. 2 positions are modified to phosphoserine: S477 and S481.

Belongs to the immunoglobulin superfamily. AMIGO family. As to quaternary structure, homodimer, and heterodimer with AMIGO2 and AMIGO3. Interacts with KCNB1.

It localises to the cell membrane. It is found in the perikaryon. The protein localises to the cell projection. Its subcellular location is the dendrite. The protein resides in the axon. Its function is as follows. Promotes growth and fasciculation of neurites from cultured hippocampal neurons. May be involved in fasciculation as well as myelination of developing neural axons. May have a role in regeneration as well as neural plasticity in the adult nervous system. May mediate homophilic as well as heterophilic cell-cell interaction and contribute to signal transduction through its intracellular domain. Assembled with KCNB1 modulates the gating characteristics of the delayed rectifier voltage-dependent potassium channel KCNB1. This is Amphoterin-induced protein 1 from Rattus norvegicus (Rat).